The primary structure comprises 409 residues: Phosphoglycerate kinase (409 aa).

Residues 22–24 (DLN), Arg37, 60–63 (HLSR), Arg122, and Arg164 each bind substrate. ATP-binding positions include Lys215, Glu338, and 365–368 (GGDS).

Belongs to the phosphoglycerate kinase family. In terms of assembly, monomer.

The protein localises to the cytoplasm. It catalyses the reaction (2R)-3-phosphoglycerate + ATP = (2R)-3-phospho-glyceroyl phosphate + ADP. It participates in carbohydrate degradation; glycolysis; pyruvate from D-glyceraldehyde 3-phosphate: step 2/5. The protein is Phosphoglycerate kinase (pgk) of Mycoplasma pneumoniae (strain ATCC 29342 / M129 / Subtype 1) (Mycoplasmoides pneumoniae).